We begin with the raw amino-acid sequence, 419 residues long: Inositol-tetrakisphosphate 1-kinase (419 aa).

A 1D-myo-inositol 1,3,4-trisphosphate-binding site is contributed by Lys-18. ATP contacts are provided by Arg-106 and Lys-157. Positions 117 to 325 (EAYMKDDRIC…IASVLQGQSS (209 aa)) constitute an ATP-grasp domain. 1D-myo-inositol 1,3,4-trisphosphate contacts are provided by His-167 and Lys-199. ATP-binding positions include 188–199 (QNFINHNAVLYK), Ser-214, Ser-232, and Ser-236. The Mg(2+) site is built by Asp-281, Asp-295, and Asn-297. Asn-297 contacts 1D-myo-inositol 1,3,4-trisphosphate. The residue at position 388 (Lys-388) is an N6-acetyllysine; by EP300 and CREBBP. A Phosphoserine modification is found at Ser-401. Lys-415 carries the N6-acetyllysine; by EP300 and CREBBP modification.

Belongs to the ITPK1 family. As to quaternary structure, monomer. Interacts with GPS1/COPS1. It depends on Mg(2+) as a cofactor. Post-translationally, acetylation by EP300 and CREBBP destabilizes ITPK1, and down-regulates enzymatic activity. Deacetylated by SIRT1.

The catalysed reaction is 1D-myo-inositol 3,4,5,6-tetrakisphosphate + ATP = 1D-myo-inositol 1,3,4,5,6-pentakisphosphate + ADP + H(+). It catalyses the reaction 1D-myo-inositol 1,3,4-trisphosphate + ATP = 1D-myo-inositol 1,3,4,5-tetrakisphosphate + ADP + H(+). The enzyme catalyses 1D-myo-inositol 1,3,4-trisphosphate + ATP = 1D-myo-inositol 1,3,4,6-tetrakisphosphate + ADP + H(+). It carries out the reaction 1D-myo-inositol 3,4,6-trisphosphate + ATP = 1D-myo-inositol 1,3,4,6-tetrakisphosphate + ADP + H(+). The catalysed reaction is 1D-myo-inositol 1,3,4-trisphosphate + 1D-myo-inositol 1,3,4,5,6-pentakisphosphate = 1D-myo-inositol 3,4,5,6-tetrakisphosphate + 1D-myo-inositol 1,3,4,6-tetrakisphosphate. It catalyses the reaction 1D-myo-inositol 1,3,4-trisphosphate + 1D-myo-inositol 1,3,4,5,6-pentakisphosphate = 1D-myo-inositol 3,4,5,6-tetrakisphosphate + 1D-myo-inositol 1,3,4,5-tetrakisphosphate. Kinase that can phosphorylate various inositol polyphosphate such as Ins(3,4,5,6)P4 or Ins(1,3,4)P3. Phosphorylates Ins(3,4,5,6)P4 at position 1 to form Ins(1,3,4,5,6)P5. This reaction is thought to have regulatory importance, since Ins(3,4,5,6)P4 is an inhibitor of plasma membrane Ca(2+)-activated Cl(-) channels, while Ins(1,3,4,5,6)P5 is not. Also phosphorylates Ins(1,3,4)P3 on O-5 and O-6 to form Ins(1,3,4,6)P4, an essential molecule in the hexakisphosphate (InsP6) pathway. Also acts as an inositol polyphosphate phosphatase that dephosphorylates Ins(1,3,4,5)P4 and Ins(1,3,4,6)P4 to Ins(1,3,4)P3, and Ins(1,3,4,5,6)P5 to Ins(3,4,5,6)P4. May also act as an isomerase that interconverts the inositol tetrakisphosphate isomers Ins(1,3,4,5)P4 and Ins(1,3,4,6)P4 in the presence of ADP and magnesium. Probably acts as the rate-limiting enzyme of the InsP6 pathway. Modifies TNF-alpha-induced apoptosis by interfering with the activation of TNFRSF1A-associated death domain. Plays an important role in MLKL-mediated necroptosis. Produces highly phosphorylated inositol phosphates such as inositolhexakisphosphate (InsP6) which bind to MLKL mediating the release of an N-terminal auto-inhibitory region leading to its activation. Essential for activated phospho-MLKL to oligomerize and localize to the cell membrane during necroptosis. The chain is Inositol-tetrakisphosphate 1-kinase (ITPK1) from Bos taurus (Bovine).